The chain runs to 105 residues: Large ribosomal subunit protein P2 (105 aa).

This sequence belongs to the eukaryotic ribosomal protein P1/P2 family. As to quaternary structure, P1 and P2 exist as dimers at the large ribosomal subunit. In terms of processing, phosphorylated.

In terms of biological role, plays an important role in the elongation step of protein synthesis. This is Large ribosomal subunit protein P2 (LIP2) from Leishmania braziliensis.